The sequence spans 497 residues: Vacuolar-processing enzyme (497 aa).

The signal sequence occupies residues 1-31 (METHKSLLFFTNYVLFLVFTLSFLPIPGLLA). Histidine 180 is a catalytic residue. Cysteine 222 (nucleophile) is an active-site residue. Residues cysteine 255 and cysteine 269 are joined by a disulfide bond. Residues asparagine 320 and asparagine 374 are each glycosylated (N-linked (GlcNAc...) asparagine). Intrachain disulfides connect cysteine 433–cysteine 463 and cysteine 445–cysteine 480.

This sequence belongs to the peptidase C13 family.

Functionally, asparagine-specific endopeptidase involved in the processing of vacuolar seed protein precursors into the mature forms. The polypeptide is Vacuolar-processing enzyme (Ricinus communis (Castor bean)).